The chain runs to 277 residues: Zinc transporter ZupT (277 aa).

8 helical membrane passes run 7–27, 38–58, 73–93, 133–155, 165–187, 196–216, 220–240, and 257–277; these read VLLA…GSAI, FLAV…FVEI, VLAS…IAVI, AGVL…AFSA, AIAV…PIYY, FLYS…GYVV, FFTP…MVYI, and LCIL…LLFL. Residues Asn-145 and Glu-148 each coordinate Fe(2+). Glu-148 and His-173 together coordinate Zn(2+). Residues Asn-174, Glu-177, and Glu-206 each coordinate Fe(2+). Residue Glu-177 participates in Zn(2+) binding.

The protein belongs to the ZIP transporter (TC 2.A.5) family. ZupT subfamily.

It localises to the cell inner membrane. The enzyme catalyses Zn(2+)(in) = Zn(2+)(out). Its function is as follows. Mediates zinc uptake. May also transport other divalent cations. This is Zinc transporter ZupT from Nitratidesulfovibrio vulgaris (strain ATCC 29579 / DSM 644 / CCUG 34227 / NCIMB 8303 / VKM B-1760 / Hildenborough) (Desulfovibrio vulgaris).